Reading from the N-terminus, the 37-residue chain is MANEGDVYKCELCGQVVKVLEEGGGTLVCCGEDMVKQ.

The Fe cation site is built by Cys-10, Cys-13, Cys-29, and Cys-30.

To the N-terminal section of desulfoferrodoxin. In terms of assembly, homodimer. Requires Fe cation as cofactor.

Functionally, nonheme iron protein possibly involved in electron transport. This Megalodesulfovibrio gigas (Desulfovibrio gigas) protein is Desulforedoxin (dsr).